The primary structure comprises 307 residues: Elongation factor Ts (307 aa).

The segment at T80–V83 is involved in Mg(2+) ion dislocation from EF-Tu.

The protein belongs to the EF-Ts family.

The protein localises to the cytoplasm. Functionally, associates with the EF-Tu.GDP complex and induces the exchange of GDP to GTP. It remains bound to the aminoacyl-tRNA.EF-Tu.GTP complex up to the GTP hydrolysis stage on the ribosome. This Methylobacterium sp. (strain 4-46) protein is Elongation factor Ts.